Consider the following 445-residue polypeptide: 3-phosphoshikimate 1-carboxyvinyltransferase (445 aa).

3-phosphoshikimate is bound by residues Lys-28, Ser-29, and Arg-33. Lys-28 is a phosphoenolpyruvate binding site. Gly-101 and Arg-129 together coordinate phosphoenolpyruvate. 3-phosphoshikimate-binding residues include Ser-175, Gln-177, Asp-328, and Lys-355. Position 177 (Gln-177) interacts with phosphoenolpyruvate. Asp-328 (proton acceptor) is an active-site residue. Residues Arg-359 and Arg-402 each contribute to the phosphoenolpyruvate site.

The protein belongs to the EPSP synthase family. In terms of assembly, monomer.

It is found in the cytoplasm. The catalysed reaction is 3-phosphoshikimate + phosphoenolpyruvate = 5-O-(1-carboxyvinyl)-3-phosphoshikimate + phosphate. Its pathway is metabolic intermediate biosynthesis; chorismate biosynthesis; chorismate from D-erythrose 4-phosphate and phosphoenolpyruvate: step 6/7. In terms of biological role, catalyzes the transfer of the enolpyruvyl moiety of phosphoenolpyruvate (PEP) to the 5-hydroxyl of shikimate-3-phosphate (S3P) to produce enolpyruvyl shikimate-3-phosphate and inorganic phosphate. This is 3-phosphoshikimate 1-carboxyvinyltransferase from Rhodopseudomonas palustris (strain BisA53).